A 351-amino-acid polypeptide reads, in one-letter code: Glycerol-3-phosphate dehydrogenase [NAD(P)+] (351 aa).

The NADPH site is built by S12, W13, H33, and K114. The sn-glycerol 3-phosphate site is built by K114, G145, and S147. A149 provides a ligand contact to NADPH. Sn-glycerol 3-phosphate is bound by residues K200, D253, S263, R264, and N265. Residue K200 is the Proton acceptor of the active site. R264 contributes to the NADPH binding site. NADPH-binding residues include V288 and E290.

The protein belongs to the NAD-dependent glycerol-3-phosphate dehydrogenase family.

The protein resides in the cytoplasm. It carries out the reaction sn-glycerol 3-phosphate + NAD(+) = dihydroxyacetone phosphate + NADH + H(+). The enzyme catalyses sn-glycerol 3-phosphate + NADP(+) = dihydroxyacetone phosphate + NADPH + H(+). It participates in membrane lipid metabolism; glycerophospholipid metabolism. Functionally, catalyzes the reduction of the glycolytic intermediate dihydroxyacetone phosphate (DHAP) to sn-glycerol 3-phosphate (G3P), the key precursor for phospholipid synthesis. The sequence is that of Glycerol-3-phosphate dehydrogenase [NAD(P)+] from Lacticaseibacillus paracasei (strain ATCC 334 / BCRC 17002 / CCUG 31169 / CIP 107868 / KCTC 3260 / NRRL B-441) (Lactobacillus paracasei).